We begin with the raw amino-acid sequence, 307 residues long: Protoheme IX farnesyltransferase (307 aa).

The next 9 membrane-spanning stretches (helical) occupy residues 31-51 (VTQL…PGMV), 55-75 (VLIG…AINC), 103-123 (TLVF…VYAN), 125-145 (LTMW…TILL), 153-173 (IVIG…AVAG), 179-199 (AWFL…ALAL), 223-243 (LLHI…PFVY), 246-266 (SGYI…AYAW), and 285-305 (ILYL…KFVP).

Belongs to the UbiA prenyltransferase family. Protoheme IX farnesyltransferase subfamily.

The protein localises to the cell inner membrane. The enzyme catalyses heme b + (2E,6E)-farnesyl diphosphate + H2O = Fe(II)-heme o + diphosphate. It functions in the pathway porphyrin-containing compound metabolism; heme O biosynthesis; heme O from protoheme: step 1/1. Functionally, converts heme B (protoheme IX) to heme O by substitution of the vinyl group on carbon 2 of heme B porphyrin ring with a hydroxyethyl farnesyl side group. The sequence is that of Protoheme IX farnesyltransferase from Cupriavidus necator (strain ATCC 17699 / DSM 428 / KCTC 22496 / NCIMB 10442 / H16 / Stanier 337) (Ralstonia eutropha).